The primary structure comprises 509 residues: Maturase K (509 aa).

Belongs to the intron maturase 2 family. MatK subfamily.

It is found in the plastid. The protein localises to the chloroplast. Usually encoded in the trnK tRNA gene intron. Probably assists in splicing its own and other chloroplast group II introns. This is Maturase K from Opuntia quimilo (Cactus).